We begin with the raw amino-acid sequence, 530 residues long: Glucose-6-phosphate isomerase (530 aa).

Glu322 serves as the catalytic Proton donor. Catalysis depends on residues His351 and Lys455.

Belongs to the GPI family.

It is found in the cytoplasm. The catalysed reaction is alpha-D-glucose 6-phosphate = beta-D-fructose 6-phosphate. It participates in carbohydrate biosynthesis; gluconeogenesis. The protein operates within carbohydrate degradation; glycolysis; D-glyceraldehyde 3-phosphate and glycerone phosphate from D-glucose: step 2/4. Catalyzes the reversible isomerization of glucose-6-phosphate to fructose-6-phosphate. This is Glucose-6-phosphate isomerase from Citrifermentans bemidjiense (strain ATCC BAA-1014 / DSM 16622 / JCM 12645 / Bem) (Geobacter bemidjiensis).